The chain runs to 588 residues: Pescadillo homolog (588 aa).

Positions 1–54 are required for 28S ribosomal RNA processing; that stretch reads MGGLEKKKYERGSATNYITRNKARKKLQLSLADFRRLCILKGIYPHEPKHKKKV. The sufficient for nucleolar localization stretch occupies residues 1-257; it reads MGGLEKKKYE…PKLEGQAQAE (257 aa). Position 98 is an N6-acetyllysine (Lys98). The tract at residues 294 to 314 is disordered; it reads EAEVDEFPTDGEMSAQEEDRR. The sufficient for interaction with MAP1B stretch occupies residues 306-415; it reads MSAQEEDRRK…LLLPVAEYFS (110 aa). Residues 322–415 enclose the BRCT domain; sequence KHKKLFEGLK…LLLPVAEYFS (94 aa). The segment at 448-515 is disordered; sequence GEDPGNLNES…GKKPRVMAGT (68 aa). Residues 456 to 486 show a composition bias toward acidic residues; sequence ESEEEEEEDDNNEGDGDEEGENEEEEEDAEA. Positions 487–508 are enriched in basic and acidic residues; it reads GSEKEEEARLAALEEQRMEGKK. A Glycyl lysine isopeptide (Lys-Gly) (interchain with G-Cter in SUMO1); alternate cross-link involves residue Lys517. Lys517 is covalently cross-linked (Glycyl lysine isopeptide (Lys-Gly) (interchain with G-Cter in SUMO2); alternate). The segment at 539-588 is required for 28S ribosomal RNA processing; that stretch reads MMKKREKYLYQKIMFGKRRKIREANKLAEKRKAHDEAVRSEKKAKKARPE. The interval 565–588 is disordered; that stretch reads LAEKRKAHDEAVRSEKKAKKARPE.

This sequence belongs to the pescadillo family. In terms of assembly, component of the PeBoW complex, composed of BOP1, PES1 and WDR12. The complex is held together by BOP1, which interacts with PES1 via its N-terminal domain and with WDR12 via a high-affinity interaction between the seven-bladed beta-propeller domains of the 2 proteins. The PeBoW complex associates with the 66S pre-ribosome. The PeBoW complex also associates with DDX27, PES1 interacts directly with DDX27. Interacts with IRS1 and UBTF. May interact with MAP1B. Sumoylated. As to expression, significant levels are detected in a variety of cancer cell lines, including glioblastoma, breast carcinoma, colon carcinoma and cervical carcinoma cells. Levels are abnormally elevated in malignant tumors of astrocytic origin.

The protein localises to the nucleus. It is found in the nucleolus. The protein resides in the nucleoplasm. Its subcellular location is the chromosome. In terms of biological role, component of the PeBoW complex, which is required for maturation of 28S and 5.8S ribosomal RNAs and formation of the 60S ribosome. The protein is Pescadillo homolog of Homo sapiens (Human).